The following is a 338-amino-acid chain: Nicotinate-nucleotide--dimethylbenzimidazole phosphoribosyltransferase (338 aa).

Glu-305 acts as the Proton acceptor in catalysis.

It belongs to the CobT family.

The catalysed reaction is 5,6-dimethylbenzimidazole + nicotinate beta-D-ribonucleotide = alpha-ribazole 5'-phosphate + nicotinate + H(+). It participates in nucleoside biosynthesis; alpha-ribazole biosynthesis; alpha-ribazole from 5,6-dimethylbenzimidazole: step 1/2. In terms of biological role, catalyzes the synthesis of alpha-ribazole-5'-phosphate from nicotinate mononucleotide (NAMN) and 5,6-dimethylbenzimidazole (DMB). This Rhizobium meliloti (strain 1021) (Ensifer meliloti) protein is Nicotinate-nucleotide--dimethylbenzimidazole phosphoribosyltransferase.